A 249-amino-acid chain; its full sequence is Triosephosphate isomerase (249 aa).

9-11 contributes to the substrate binding site; sequence NWK. The active-site Electrophile is His94. Glu166 (proton acceptor) is an active-site residue. Substrate contacts are provided by residues Gly172, Ser211, and 232-233; that span reads GG.

Belongs to the triosephosphate isomerase family. As to quaternary structure, homodimer.

It localises to the cytoplasm. It catalyses the reaction D-glyceraldehyde 3-phosphate = dihydroxyacetone phosphate. Its pathway is carbohydrate biosynthesis; gluconeogenesis. It functions in the pathway carbohydrate degradation; glycolysis; D-glyceraldehyde 3-phosphate from glycerone phosphate: step 1/1. Its function is as follows. Involved in the gluconeogenesis. Catalyzes stereospecifically the conversion of dihydroxyacetone phosphate (DHAP) to D-glyceraldehyde-3-phosphate (G3P). The polypeptide is Triosephosphate isomerase (Moorella thermoacetica (strain ATCC 39073 / JCM 9320)).